The following is a 511-amino-acid chain: Sporulation-specific chitinase 2 (511 aa).

Residues 1-34 form the signal peptide; it reads MVGHSAQHRSKSSLVSHLLILLIFITIIIEMCLY. The 400-residue stretch at 73 to 472 folds into the GH18 domain; it reads FISGVYYSNW…NAFNEGLHFN (400 aa). Asn147 carries N-linked (GlcNAc...) asparagine glycosylation. Glu223 functions as the Proton donor in the catalytic mechanism. N-linked (GlcNAc...) asparagine glycosylation is found at Asn228, Asn456, and Asn472.

It belongs to the glycosyl hydrolase 18 family. Chitinase class III subfamily.

Its subcellular location is the secreted. It carries out the reaction Random endo-hydrolysis of N-acetyl-beta-D-glucosaminide (1-&gt;4)-beta-linkages in chitin and chitodextrins.. The sequence is that of Sporulation-specific chitinase 2 (CTS2) from Saccharomyces cerevisiae (strain ATCC 204508 / S288c) (Baker's yeast).